The following is a 148-amino-acid chain: Lysozyme C (148 aa).

Residues 1–18 form the signal peptide; the sequence is MKAVIILGLVLLSVTVQG. The 130-residue stretch at 19-148 folds into the C-type lysozyme domain; it reads KIFERCELAR…VSQYVQGCGV (130 aa). Intrachain disulfides connect cysteine 24-cysteine 146, cysteine 48-cysteine 134, cysteine 83-cysteine 99, and cysteine 95-cysteine 113. Active-site residues include glutamate 53 and aspartate 71.

The protein belongs to the glycosyl hydrolase 22 family. Monomer.

Its subcellular location is the secreted. The enzyme catalyses Hydrolysis of (1-&gt;4)-beta-linkages between N-acetylmuramic acid and N-acetyl-D-glucosamine residues in a peptidoglycan and between N-acetyl-D-glucosamine residues in chitodextrins.. Its function is as follows. Lysozymes have primarily a bacteriolytic function; those in tissues and body fluids are associated with the monocyte-macrophage system and enhance the activity of immunoagents. In Macaca mulatta (Rhesus macaque), this protein is Lysozyme C (LYZ).